Reading from the N-terminus, the 97-residue chain is YcgL domain-containing protein PFLU_1517 (97 aa).

One can recognise a YcgL domain in the interval 3–87; that stretch reads RICSIYRSKK…AEDEYIEHLP (85 aa).

This Pseudomonas fluorescens (strain SBW25) protein is YcgL domain-containing protein PFLU_1517.